Here is a 372-residue protein sequence, read N- to C-terminus: Aminomethyltransferase (372 aa).

This sequence belongs to the GcvT family. As to quaternary structure, the glycine cleavage system is composed of four proteins: P, T, L and H.

It catalyses the reaction N(6)-[(R)-S(8)-aminomethyldihydrolipoyl]-L-lysyl-[protein] + (6S)-5,6,7,8-tetrahydrofolate = N(6)-[(R)-dihydrolipoyl]-L-lysyl-[protein] + (6R)-5,10-methylene-5,6,7,8-tetrahydrofolate + NH4(+). The glycine cleavage system catalyzes the degradation of glycine. In Synechococcus elongatus (strain ATCC 33912 / PCC 7942 / FACHB-805) (Anacystis nidulans R2), this protein is Aminomethyltransferase.